The following is a 271-amino-acid chain: Probable diacyglycerol O-acyltransferase tgs3 (271 aa).

It belongs to the long-chain O-acyltransferase family.

The catalysed reaction is an acyl-CoA + a 1,2-diacyl-sn-glycerol = a triacyl-sn-glycerol + CoA. It functions in the pathway glycerolipid metabolism; triacylglycerol biosynthesis. In terms of biological role, catalyzes the terminal and only committed step in triacylglycerol synthesis by using diacylglycerol and fatty acyl CoA as substrates. Required for storage lipid synthesis. The sequence is that of Probable diacyglycerol O-acyltransferase tgs3 (tgs3) from Mycobacterium tuberculosis (strain CDC 1551 / Oshkosh).